A 600-amino-acid polypeptide reads, in one-letter code: Brain-enriched guanylate kinase-associated protein (600 aa).

Residue methionine 1 is modified to N-acetylmethionine. Tyrosine 137 is subject to Phosphotyrosine. A disordered region spans residues 192–222 (PGSLSSRMSDASARDLGYRDGVEKSGPRPPY). Serine 200 carries the phosphoserine modification. Residues 203-217 (SARDLGYRDGVEKSG) show a composition bias toward basic and acidic residues. Phosphoserine is present on residues serine 229 and serine 246. Phosphothreonine is present on threonine 249. Serine 265 bears the Phosphoserine mark. Residues 298 to 317 (SSYSSFSATSEEKEHAQAGT) are disordered. Serine 372 carries the post-translational modification Phosphoserine. Arginine 380 bears the Asymmetric dimethylarginine mark. Phosphoserine occurs at positions 463, 473, 483, 485, 508, 510, and 514. The segment at 537-590 (GAGSSPEPEHGSRESLEPSSMEASPEMHPPTRLSPQQAFPRTGGSGLSRKDSLT) is disordered. A compositionally biased stretch (basic and acidic residues) spans 543–552 (EPEHGSRESL). Residues serine 560 and serine 570 each carry the phosphoserine modification.

Interacts with DLG4 and DLGAP1 and forms a ternary complex.

The protein resides in the cytoplasm. It is found in the membrane. May sustain the structure of the postsynaptic density (PSD). The sequence is that of Brain-enriched guanylate kinase-associated protein (Begain) from Mus musculus (Mouse).